The chain runs to 354 residues: DNA integrity scanning protein DisA (354 aa).

The region spanning 6 to 144 (GIGIKNVLKI…GDIKYVLRES (139 aa)) is the DAC domain. ATP-binding positions include glycine 73, leucine 91, and 104 to 108 (TRHRT).

Belongs to the DisA family. As to quaternary structure, homooctamer. Requires Mg(2+) as cofactor.

It carries out the reaction 2 ATP = 3',3'-c-di-AMP + 2 diphosphate. Its function is as follows. Participates in a DNA-damage check-point that is active prior to asymmetric division when DNA is damaged. DisA forms globular foci that rapidly scan along the chromosomes during sporulation, searching for lesions. When a lesion is present, DisA pauses at the lesion site. This triggers a cellular response that culminates in a temporary block in sporulation initiation. In terms of biological role, also has diadenylate cyclase activity, catalyzing the condensation of 2 ATP molecules into cyclic di-AMP (c-di-AMP). c-di-AMP acts as a signaling molecule that couples DNA integrity with progression of sporulation. The rise in c-di-AMP level generated by DisA while scanning the chromosome, operates as a positive signal that advances sporulation; upon encountering a lesion, the DisA focus arrests at the damaged site and halts c-di-AMP synthesis. This Clostridium beijerinckii (strain ATCC 51743 / NCIMB 8052) (Clostridium acetobutylicum) protein is DNA integrity scanning protein DisA.